Here is a 186-residue protein sequence, read N- to C-terminus: Peptidyl-tRNA hydrolase (186 aa).

Tyrosine 14 is a binding site for tRNA. Histidine 19 acts as the Proton acceptor in catalysis. Tyrosine 61, asparagine 63, and asparagine 107 together coordinate tRNA.

It belongs to the PTH family. In terms of assembly, monomer.

It localises to the cytoplasm. The enzyme catalyses an N-acyl-L-alpha-aminoacyl-tRNA + H2O = an N-acyl-L-amino acid + a tRNA + H(+). Functionally, hydrolyzes ribosome-free peptidyl-tRNAs (with 1 or more amino acids incorporated), which drop off the ribosome during protein synthesis, or as a result of ribosome stalling. In terms of biological role, catalyzes the release of premature peptidyl moieties from peptidyl-tRNA molecules trapped in stalled 50S ribosomal subunits, and thus maintains levels of free tRNAs and 50S ribosomes. The polypeptide is Peptidyl-tRNA hydrolase (Helicobacter pylori (strain Shi470)).